A 275-amino-acid polypeptide reads, in one-letter code: Testis-specific gene 13 protein (275 aa).

Polar residues predominate over residues 1–20 (MSQKRQTKFQNGKSKTSENS). The interval 1–28 (MSQKRQTKFQNGKSKTSENSSAKREKGM) is disordered.

In terms of tissue distribution, testis-specific.

This Homo sapiens (Human) protein is Testis-specific gene 13 protein (TSGA13).